Reading from the N-terminus, the 482-residue chain is Ubiquitin carboxyl-terminal hydrolase 6 (482 aa).

One can recognise a Ubiquitin-like domain in the interval 2-77 (PTVSVKWQKK…LMMMGTADEI (76 aa)). The region spanning 104 to 478 (AGLVNLGNTC…MAYITMYKAR (375 aa)) is the USP domain. Cysteine 113 acts as the Nucleophile in catalysis. Residues 172-191 (SQFWMVLRKKYPQFSQLQNG) form a calmodulin-binding region. Composition is skewed to basic and acidic residues over residues 350 to 361 (PRQKLREEEGKK) and 371 to 381 (GSKDSDVKMTD). The segment at 350 to 407 (PRQKLREEEGKKLGLQTSAKSGSKDSDVKMTDAEASANGSGESSTVNPQEGTSSEKET) is disordered. Positions 382–393 (AEASANGSGESS) are enriched in low complexity. The Proton acceptor role is filled by histidine 430.

Belongs to the peptidase C19 family. Interacts with calmodulin (CaM).

It carries out the reaction Thiol-dependent hydrolysis of ester, thioester, amide, peptide and isopeptide bonds formed by the C-terminal Gly of ubiquitin (a 76-residue protein attached to proteins as an intracellular targeting signal).. Recognizes and hydrolyzes the peptide bond at the C-terminal Gly of ubiquitin. Involved in the processing of poly-ubiquitin precursors as well as that of ubiquitinated proteins. The protein is Ubiquitin carboxyl-terminal hydrolase 6 (UBP6) of Arabidopsis thaliana (Mouse-ear cress).